Here is a 656-residue protein sequence, read N- to C-terminus: Chaperone protein DnaK (656 aa).

Residue threonine 204 is modified to Phosphothreonine; by autocatalysis. The interval 602–656 (KLAERVYAKKGGAAGAPPGGEAEGEPQAQAGGKKEDVVDAEFEEVKDEKKKDEDK) is disordered. Over residues 620 to 632 (GGEAEGEPQAQAG) the composition is skewed to low complexity. Residues 647 to 656 (KDEKKKDEDK) show a composition bias toward basic and acidic residues.

It belongs to the heat shock protein 70 family.

Its function is as follows. Acts as a chaperone. The chain is Chaperone protein DnaK from Coxiella burnetii (strain CbuG_Q212) (Coxiella burnetii (strain Q212)).